We begin with the raw amino-acid sequence, 145 residues long: Succinate dehydrogenase assembly factor 2, mitochondrial (145 aa).

The protein belongs to the SDHAF2 family. In terms of assembly, interacts with the flavoprotein subunit within the SDH catalytic dimer.

The protein resides in the mitochondrion matrix. Its function is as follows. Plays an essential role in the assembly of succinate dehydrogenase (SDH), an enzyme complex (also referred to as respiratory complex II) that is a component of both the tricarboxylic acid (TCA) cycle and the mitochondrial electron transport chain, and which couples the oxidation of succinate to fumarate with the reduction of ubiquinone (coenzyme Q) to ubiquinol. Required for flavinylation (covalent attachment of FAD) of the flavoprotein subunit of the SDH catalytic dimer. This Yarrowia lipolytica (strain CLIB 122 / E 150) (Yeast) protein is Succinate dehydrogenase assembly factor 2, mitochondrial.